The following is a 250-amino-acid chain: Proteasome subunit alpha type-8 (250 aa).

This sequence belongs to the peptidase T1A family. In terms of assembly, component of the outer alpha-ring of the 20S proteasome core which is composed of 28 subunits that are arranged in four stacked rings, resulting in a barrel-shaped structure. The catalytic chamber with the active sites is on the inside of the barrel. Interacts with canonical subunits of the spermatoproteasome, including proteasome activators PSME4 (also called PA200) and PSME3 (also called PA28-gamma). Interacts with proteasome-interacting proteins chaperones including CCT6B and CCT2, ubiquitin ligases (TRIP12, NEDD4, TRIM36 and RAD18), and ubiquitin specific proteases such as USP9X, USP34, USP5 and USP47. Interacts with meiotic proteins cyclin dependent kinase CDK1 and the ATPase TRIP13 as well as proteins of the synaptonemal complex SIX6OS1 and SYCE3.

The protein resides in the nucleus. Its function is as follows. Component of the spermatoproteasome, a proteasome specifically found in testis that promotes acetylation-dependent degradation of histones, thereby participating actively to the exchange of histones during spermatogenesis. The proteasome is a protein complex that degrades unneeded or damaged proteins by proteolysis, a chemical reaction that breaks peptide bonds. Required for 20S core proteasome assembly, essential for the degradation of meiotic proteins RAD51 and RPA1 at late prophase I and the progression of meiosis I during spermatogenesis. Localizes to the synaptonemal complex, a 'zipper'-like structure that holds homologous chromosome pairs in synapsis during meiotic prophase I. The sequence is that of Proteasome subunit alpha type-8 from Mus musculus (Mouse).